A 1553-amino-acid polypeptide reads, in one-letter code: ABC-type transporter cctS (1553 aa).

The next 4 helical transmembrane spans lie at 27 to 47 (LIPLTACLASAIACLISYFHA), 90 to 110 (LEVALILAEISIAIFLLIFSG), 114 to 134 (DLTSVFASAVSSIYLLLILFV), and 151 to 171 (SVLYTLQWTCLTAIVHAAILG). N-linked (GlcNAc...) asparagine glycosylation is present at Asn176. 5 consecutive transmembrane segments (helical) span residues 177 to 197 (FTIATLVRFALFTFLCLFHWT), 286 to 306 (LLWQGAWATLNSFAVFVPPVL), 324 to 344 (TAWLYVTGLLVAGIVAGVAGC), 413 to 433 (GYLYLVWITFPVQTAIGTYLL), and 438 to 458 (GISGIVGVALMLGLLPLNILI). One can recognise an ABC transmembrane type-1 1 domain in the interval 293 to 582 (ATLNSFAVFV…IADAITFLLR (290 aa)). The N-linked (GlcNAc...) asparagine glycan is linked to Asn524. A run of 2 helical transmembrane segments spans residues 527–547 (TFFSLPLIVTILTLFFYTVVW) and 550–570 (SMGTAVAFPALVIFSILRIPF). The N-linked (GlcNAc...) asparagine glycan is linked to Asn617. The region spanning 635–874 (NKRSDIQLTE…GRIDADIMQN (240 aa)) is the ABC transporter 1 domain. 670–677 (GPSGSGKS) provides a ligand contact to ATP. Asn725 carries N-linked (GlcNAc...) asparagine glycosylation. The chain crosses the membrane as a helical span at residues 948-970 (WYWVLVLFMFGIQQFISLATNIW). The region spanning 951–1255 (VLVLFMFGIQ…FVQLYAIVQQ (305 aa)) is the ABC transmembrane type-1 2 domain. N-linked (GlcNAc...) asparagine glycosylation occurs at Asn992. A helical membrane pass occupies residues 1017-1037 (IYVAICLAYAFFTFARDLIVF). An N-linked (GlcNAc...) asparagine glycan is attached at Asn1085. A run of 4 helical transmembrane segments spans residues 1086-1108 (ISTFSINTLQIAASLVMIIVFIS), 1113-1135 (AFLIAAVFICVAYWFVMTIFING), 1204-1224 (FLGSLILFFTGAFVVWDLESV), and 1229-1249 (AALVLTYAAMFSESIMWFVQL). The region spanning 1294-1533 (VRFDAYTTRY…DDDGIFRRLC (240 aa)) is the ABC transporter 2 domain. 1328-1335 (GRTGAGKS) lines the ATP pocket.

It belongs to the ABC transporter superfamily.

Its subcellular location is the membrane. The protein operates within mycotoxin biosynthesis. ABC-type transporter; part of the gene cluster that mediates the biosynthesis of the mycotoxin cyclochlorotine, a hepatotoxic and carcinogenic cyclic chlorinated pentapeptide. CctS is essential for the biosynthesis of cyclochlorotine, maybe as a chloride channel that supplies chloride for chlorination by cctP2. This Talaromyces islandicus (Penicillium islandicum) protein is ABC-type transporter cctS.